The primary structure comprises 209 residues: MDTNHPGSAGGRGGLGSIFGGGPPGYSHSDLAGVPLTGMSPLSPYLNVDPMYLVQDTDEFILPTGANKTRGRFELAFFTIGGCCISGAAFGALNGLKLGFKETQNMPWSKPKNVQILNMVTRQGALWANTLGSLALLYSAFGVIVEKTRGAEDDLNTIAAGTMTGMLYKSTGGLRGVARGGLAGLALASTFALYNNWEHIKGSSSQVSL.

3 consecutive transmembrane segments (helical) span residues 73–93 (FELA…FGAL), 125–145 (ALWA…GVIV), and 180–200 (GGLA…WEHI).

The protein belongs to the Tim17/Tim22/Tim23 family. Component of the TIM23 complex at least composed of timm23, timm17 and timm50. The complex interacts with the timm44 component of the PAM complex.

It localises to the mitochondrion inner membrane. Essential component of the TIM23 complex, a complex that mediates the translocation of transit peptide-containing proteins across the mitochondrial inner membrane. The sequence is that of Mitochondrial import inner membrane translocase subunit Tim23 (timm23) from Xenopus laevis (African clawed frog).